Here is a 610-residue protein sequence, read N- to C-terminus: Solute carrier family 2, facilitated glucose transporter member 12 (610 aa).

Residues 1–49 lie on the Cytoplasmic side of the membrane; that stretch reads MDAPEESIRMTSDPQSKIYVQNPDTHIHLEQGPSAKSGNGRALVLCSVS. The helical transmembrane segment at 50–70 threads the bilayer; it reads VACLSGLLMGYEMSLISGALL. At 71–84 the chain is on the extracellular side; the sequence is QLRDVLTLSCPEQE. Residues 85 to 105 form a helical membrane-spanning segment; sequence QVVGSLLLGAFLLSLGGGTIL. The Cytoplasmic portion of the chain corresponds to 106 to 118; sequence DHYGRRFTIILTA. Residues 119-139 form a helical membrane-spanning segment; it reads LLCVLGTLLSVCVVSFWALVV. At 140–141 the chain is on the extracellular side; sequence GR. The helical transmembrane segment at 142 to 162 threads the bilayer; the sequence is MLVGMSVALSGTASCLYAAEV. Residues 163–176 lie on the Cytoplasmic side of the membrane; sequence APAAWRGRCVCVYE. The chain crosses the membrane as a helical span at residues 177 to 197; the sequence is LMVVLGMLLGFGLSWAFAGVP. Residues 198–201 are Extracellular-facing; the sequence is DGWR. Residues 202-222 traverse the membrane as a helical segment; it reads FTFGGALLPALLQAGVMPLLP. Residues 223–286 lie on the Cytoplasmic side of the membrane; that stretch reads DSPRFLLAQQ…FQSRDNMLQR (64 aa). The helical transmembrane segment at 287-307 threads the bilayer; sequence LLVGAALVFLQQATGQPNILA. Topologically, residues 308-325 are extracellular; it reads YASTVLSSVGFHGNEAAT. Residues 326–346 traverse the membrane as a helical segment; that stretch reads LASTGFGVVKVGGTIPAIFLV. Over 347-353 the chain is Cytoplasmic; the sequence is DKVGPKA. The chain crosses the membrane as a helical span at residues 354 to 374; the sequence is LLCVGVVVMMLSTATLGAITM. Over 375–475 the chain is Extracellular; sequence QSRTHVSSLC…LHEVSPSLKW (101 aa). N-linked (GlcNAc...) asparagine glycans are attached at residues Asn392, Asn429, and Asn438. Residues 476 to 496 traverse the membrane as a helical segment; sequence ISLVSLLVYVAGFSISLGPMV. Topologically, residues 497–511 are cytoplasmic; it reads HVVLSAIFPTGIRGK. Residues 512–532 traverse the membrane as a helical segment; sequence AVSVISAFNWATNLLISMTFL. The Extracellular segment spans residues 533-542; the sequence is TLTERIGLPT. The chain crosses the membrane as a helical span at residues 543 to 563; sequence VIFSYSAMSFLLVVFVIVFVP. Over 564–610 the chain is Cytoplasmic; sequence ETKGRSLEQISKELAMKNHLRGTLLCHRRKHKATAQPSQEEKALATV.

The protein belongs to the major facilitator superfamily. Sugar transporter (TC 2.A.1.1) family. Glucose transporter subfamily. Expressed in the main insulin-sensitive tissues, such as cardiac muscle, skeletal muscle and adipose tissue.

The protein localises to the cell membrane. It is found in the endomembrane system. Its subcellular location is the cytoplasm. The protein resides in the perinuclear region. It carries out the reaction D-glucose(out) = D-glucose(in). In terms of biological role, insulin-regulated facilitative glucose transporter. The chain is Solute carrier family 2, facilitated glucose transporter member 12 from Danio rerio (Zebrafish).